We begin with the raw amino-acid sequence, 1024 residues long: MTMITDSLAVVLQRRDWENPGVTQLNRLAAHPPFASWRNSEEARTDRPSQQLRSLNGEWRFAWFPAPEAVPESWLECDLPEADTVVVPSNWQMHGYDAPIYTNVTYPITVNPPFVPTENPTGCYSLTFNVDESWLQEGQTRIIFDGVNSAFHLWCNGRWVGYGQDSRLPSEFDLSAFLRAGENRLAVMVLRWSDGSYLEDQDMWRMSGIFRDVSLLHKPTTQISDFHVATRFNDDFSRAVLEAEVQMCGELRDYLRVTVSLWQGETQVASGTAPFGGEIIDERGSYADRVTLRLNVENPKLWSAEIPNLYRAVVELHTADGTLIEAEACDVGFREVRIENGLLLLNGKPLLIRGVNRHEHHPLHGQVMDEQTMVQDILLMKQNNFNAVRCSHYPNHPLWYTLCDRYGLYVVDEANIETHGMVPMNRLTDDPRWLPAMSERVTRMVQRDRNHPSVIIWSLGNESGHGANHDALYRWIKSVDPSRPVQYEGGGADTTATDIICPMYARVDEDQPFPAVPKWSIKKWLSLPGETRPLILCEYAHAMGNSLGGFAKYWQAFRQYPRLQGGFVWDWVDQSLIKYDENGNPWSAYGGDFGDTPNDRQFCMNGLVFADRTPHPALTEAKHQQQFFQFRLSGQTIEVTSEYLFRHSDNELLHWMVALDGKPLASGEVPLDVAPQGKQLIELPELPQPESAGQLWLTVRVVQPNATAWSEAGHISAWQQWRLAENLSVTLPSASHIIPQLTTSETDFCIELGNKRWQFNRQSGLLSQMWIGDEKQLLTPLRDQFTRAPLDNDIGVSEATRIDPNAWVERWKAAGHYQAEAALLQCSADTLADAVLITTAHAWQHQGKTLFISRKTYRIDGSGQMAITVDVEVASDTPHPARIGLTCQLAQVAERVNWLGLGPQENYPDRLTAACFDRWDLPLSDMYTPYVFPSENGLRCGTRELNYGSHQWRGDFQFNISRYSQQQLMETSHRHLLHAEEGTWLNIDGFHMGIGGDDSWSPSVSAEFQLSAGRYHYQLVWCQK.

Residues N103 and D202 each contribute to the substrate site. D202 lines the Na(+) pocket. Residues E417, H419, and E462 each contribute to the Mg(2+) site. Substrate is bound by residues E462 and 538–541; that span reads EYAH. E462 functions as the Proton donor in the catalytic mechanism. Catalysis depends on E538, which acts as the Nucleophile. A Mg(2+)-binding site is contributed by N598. 2 residues coordinate Na(+): F602 and N605. Substrate contacts are provided by N605 and W1000.

This sequence belongs to the glycosyl hydrolase 2 family. As to quaternary structure, homotetramer. The cofactor is Mg(2+). Requires Na(+) as cofactor.

It carries out the reaction Hydrolysis of terminal non-reducing beta-D-galactose residues in beta-D-galactosides.. This chain is Beta-galactosidase, found in Escherichia coli O139:H28 (strain E24377A / ETEC).